The chain runs to 321 residues: NADPH-dependent codeinone reductase 1-4 (321 aa).

Positions 27 and 51 each coordinate NADPH. Active-site proton donor residues include Tyr56 and His119. His119 provides a ligand contact to substrate. Residues Ser165, Gln187, Ser214, Leu216, Ser264, and Arg269 each coordinate NADPH. The interval 299-321 (SADFLLSPTGPFKTEEEFWDEKD) is disordered.

Belongs to the aldo/keto reductase family. Latex secreting cells (laticifer cells). Expressed constitutively in all organs with highest levels in capsules. Restricted to the parietal region of sieve elements adjacent or proximal to laticifers in roots, stems, leaves and carpels.

It localises to the cytoplasm. Its subcellular location is the cytosol. It catalyses the reaction codeine + NADP(+) = codeinone + NADPH + H(+). The enzyme catalyses neopine + NADP(+) = neopinone + NADPH + H(+). It carries out the reaction morphine + NADP(+) = morphinone + NADPH + H(+). The catalysed reaction is neomorphine + NADP(+) = neomorphinone + NADPH + H(+). It functions in the pathway alkaloid biosynthesis; morphine biosynthesis. Functionally, NADPH-dependent codeinone reductase involved in biosynthesis of morphinan-type benzylisoquinoline and opiate alkaloids natural products. Reduces codeinone to codeine in the penultimate step in morphine biosynthesis. Can use morphinone, hydrocodone and hydromorphone as substrate during reductive reaction with NADPH as cofactor, and morphine and dihydrocodeine as substrate during oxidative reaction with NADP as cofactor. Converts morphinone to morphine, and neomorphinone to neomorphine. Reduces irreversibly neopinone, a spontaneous isomer of codeinone, to neopine; in planta, neopine levels are limited to low levels. The protein is NADPH-dependent codeinone reductase 1-4 of Papaver somniferum (Opium poppy).